A 505-amino-acid polypeptide reads, in one-letter code: N-succinylglutamate 5-semialdehyde dehydrogenase (505 aa).

234-239 (GSAHTG) contributes to the NAD(+) binding site. Residues glutamate 257 and cysteine 291 contribute to the active site.

The protein belongs to the aldehyde dehydrogenase family. AstD subfamily.

The catalysed reaction is N-succinyl-L-glutamate 5-semialdehyde + NAD(+) + H2O = N-succinyl-L-glutamate + NADH + 2 H(+). It participates in amino-acid degradation; L-arginine degradation via AST pathway; L-glutamate and succinate from L-arginine: step 4/5. Functionally, catalyzes the NAD-dependent reduction of succinylglutamate semialdehyde into succinylglutamate. This Yersinia pestis bv. Antiqua (strain Antiqua) protein is N-succinylglutamate 5-semialdehyde dehydrogenase.